We begin with the raw amino-acid sequence, 77 residues long: Translation initiation factor IF-1, chloroplastic (77 aa).

Residues methionine 1–arginine 71 enclose the S1-like domain.

This sequence belongs to the IF-1 family. Component of the 30S ribosomal translation pre-initiation complex which assembles on the 30S ribosome in the order IF-2 and IF-3, IF-1 and N-formylmethionyl-tRNA(fMet); mRNA recruitment can occur at any time during PIC assembly.

Its subcellular location is the plastid. The protein resides in the chloroplast. Its function is as follows. One of the essential components for the initiation of protein synthesis. Stabilizes the binding of IF-2 and IF-3 on the 30S subunit to which N-formylmethionyl-tRNA(fMet) subsequently binds. Helps modulate mRNA selection, yielding the 30S pre-initiation complex (PIC). Upon addition of the 50S ribosomal subunit IF-1, IF-2 and IF-3 are released leaving the mature 70S translation initiation complex. The polypeptide is Translation initiation factor IF-1, chloroplastic (Daucus carota (Wild carrot)).